Consider the following 152-residue polypeptide: 3-dehydroquinate dehydratase (152 aa).

The active-site Proton acceptor is Tyr-26. Residues Asn-78, His-84, and Asp-91 each contribute to the substrate site. His-104 functions as the Proton donor in the catalytic mechanism. Substrate contacts are provided by residues 105–106 and Arg-115; that span reads IS.

The protein belongs to the type-II 3-dehydroquinase family. Homododecamer.

The catalysed reaction is 3-dehydroquinate = 3-dehydroshikimate + H2O. It participates in metabolic intermediate biosynthesis; chorismate biosynthesis; chorismate from D-erythrose 4-phosphate and phosphoenolpyruvate: step 3/7. Functionally, catalyzes a trans-dehydration via an enolate intermediate. This chain is 3-dehydroquinate dehydratase, found in Buchnera aphidicola subsp. Cinara cedri (strain Cc).